We begin with the raw amino-acid sequence, 292 residues long: Cyclin-dependent kinase A-2 (292 aa).

The Protein kinase domain occupies 4-286 (YEKVEKIGEG…ARAALEHEYF (283 aa)). Residues 10–18 (IGEGTYGVV) and Lys33 each bind ATP. Thr14 is modified (phosphothreonine). Tyr15 is modified (phosphotyrosine). The active-site Proton acceptor is the Asp126. At Thr160 the chain carries Phosphothreonine.

It belongs to the protein kinase superfamily. CMGC Ser/Thr protein kinase family. CDC2/CDKX subfamily. Expressed in the dividing region of the root apex and in differentiated cells such as those in the sclerenchyma, pericycle and parenchyma of the central cylinder. Expressed in the intercalary meristem and the elongation zone of internodes.

The catalysed reaction is L-seryl-[protein] + ATP = O-phospho-L-seryl-[protein] + ADP + H(+). The enzyme catalyses L-threonyl-[protein] + ATP = O-phospho-L-threonyl-[protein] + ADP + H(+). It carries out the reaction [DNA-directed RNA polymerase] + ATP = phospho-[DNA-directed RNA polymerase] + ADP + H(+). This Oryza sativa subsp. japonica (Rice) protein is Cyclin-dependent kinase A-2 (CDKA-2).